The chain runs to 1375 residues: DNA-directed RNA polymerase subunit beta (1375 aa).

Belongs to the RNA polymerase beta chain family. In terms of assembly, the RNAP catalytic core consists of 2 alpha, 1 beta, 1 beta' and 1 omega subunit. When a sigma factor is associated with the core the holoenzyme is formed, which can initiate transcription.

The catalysed reaction is RNA(n) + a ribonucleoside 5'-triphosphate = RNA(n+1) + diphosphate. Its function is as follows. DNA-dependent RNA polymerase catalyzes the transcription of DNA into RNA using the four ribonucleoside triphosphates as substrates. The sequence is that of DNA-directed RNA polymerase subunit beta from Coxiella burnetii (strain Dugway 5J108-111).